The sequence spans 469 residues: Ubiquitin carboxyl-terminal hydrolase MINDY-1 (469 aa).

The segment at 1-85 (MEYHQPEDPA…APPGPTLGTL (85 aa)) is disordered. Positions 23–53 (ENHEVLAGPDEHPQDTDARDADGEAREREPA) are enriched in basic and acidic residues. Over residues 66–76 (LESPLPEASSA) the composition is skewed to low complexity. Ser-103 carries the post-translational modification Phosphoserine. Cys-137 acts as the Nucleophile in catalysis. His-319 acts as the Proton acceptor in catalysis. A ubiquitin-binding domain (UBD) region spans residues 388-426 (QVDQDYLIALSLQQQQPRGPLGLTDLELAQQLQQEEYQQ). A Phosphoserine modification is found at Ser-441. The disordered stretch occupies residues 441-469 (SLQGRGATSGRPAGERRQRPKHESDCILL). The span at 453–469 (AGERRQRPKHESDCILL) shows a compositional bias: basic and acidic residues.

This sequence belongs to the MINDY deubiquitinase family. FAM63 subfamily.

The enzyme catalyses Thiol-dependent hydrolysis of ester, thioester, amide, peptide and isopeptide bonds formed by the C-terminal Gly of ubiquitin (a 76-residue protein attached to proteins as an intracellular targeting signal).. Hydrolase that can specifically remove 'Lys-48'-linked conjugated ubiquitin from proteins. Has exodeubiquitinase activity and has a preference for long polyubiquitin chains. May play a regulatory role at the level of protein turnover. The protein is Ubiquitin carboxyl-terminal hydrolase MINDY-1 of Homo sapiens (Human).